The following is a 106-amino-acid chain: MLHRGRSCLTGLFPCYLLSNWLNSNLCWIPLKLVIPCFQLIVESYLLEFLLLLAISTCLLGEDSLIWLTLVVAHSKSRQSSSQEPLDTRMATRALLDQLRSDRRHN.

It localises to the mitochondrion. This is an uncharacterized protein from Arabidopsis thaliana (Mouse-ear cress).